Here is a 151-residue protein sequence, read N- to C-terminus: Large ribosomal subunit protein bL9 (151 aa).

This sequence belongs to the bacterial ribosomal protein bL9 family.

In terms of biological role, binds to the 23S rRNA. The polypeptide is Large ribosomal subunit protein bL9 (Francisella tularensis subsp. holarctica (strain LVS)).